The sequence spans 230 residues: Sugar fermentation stimulation protein homolog (230 aa).

This sequence belongs to the SfsA family.

The protein is Sugar fermentation stimulation protein homolog of Pelobacter propionicus (strain DSM 2379 / NBRC 103807 / OttBd1).